A 153-amino-acid polypeptide reads, in one-letter code: Endoribonuclease YbeY (153 aa).

H119, H123, and H129 together coordinate Zn(2+).

This sequence belongs to the endoribonuclease YbeY family. It depends on Zn(2+) as a cofactor.

It localises to the cytoplasm. Functionally, single strand-specific metallo-endoribonuclease involved in late-stage 70S ribosome quality control and in maturation of the 3' terminus of the 16S rRNA. In Desulforamulus reducens (strain ATCC BAA-1160 / DSM 100696 / MI-1) (Desulfotomaculum reducens), this protein is Endoribonuclease YbeY.